The chain runs to 431 residues: Adenosylhomocysteinase (431 aa).

3 residues coordinate substrate: Thr-56, Asp-131, and Glu-156. Residue 157-159 (TTT) participates in NAD(+) binding. Substrate-binding residues include Lys-186 and Asp-190. NAD(+) is bound by residues Asn-191, 222–227 (GDVGKG), Glu-243, 299–301 (IGH), and Asn-345.

The protein belongs to the adenosylhomocysteinase family. In terms of assembly, homotetramer. The cofactor is NAD(+).

The enzyme catalyses S-adenosyl-L-homocysteine + H2O = L-homocysteine + adenosine. It participates in amino-acid biosynthesis; L-homocysteine biosynthesis; L-homocysteine from S-adenosyl-L-homocysteine: step 1/1. Adenosylhomocysteine is a competitive inhibitor of S-adenosyl-L-methionine-dependent methyl transferase reactions; therefore adenosylhomocysteinase may play a key role in the control of methylations via regulation of the intracellular concentration of adenosylhomocysteine. This chain is Adenosylhomocysteinase (sahA), found in Dictyostelium discoideum (Social amoeba).